Reading from the N-terminus, the 207-residue chain is Frataxin, mitochondrial (207 aa).

The N-terminal 40 residues, methionine 1 to glycine 40, are a transit peptide targeting the mitochondrion.

Belongs to the frataxin family. As to quaternary structure, component of the mitochondrial core iron-sulfur cluster (ISC) complex composed of NFS1, LYRM4, NDUFAB1, ISCU, FXN, and FDX2; this complex is a heterohexamer containing two copies of each monomer. Homodimer. Monomer (probable predominant form). Oligomer. Monomers and polymeric aggregates of &gt;1 MDa have been isolated from mitochondria. A small fraction of heterologous overexpressed recombinant frataxin forms high-molecular weight aggregates that incorporate iron. Interacts with LYRM4. Interacts (via ferrous form) with ISCU; the interaction is possible when both are bound to the dimeric form of the cysteine desulfurase complex (NFS1:LYRM4) and the interaction enhances FXN interaction to the dimeric form of the cysteine desulfurase complex (NFS1:LYRM4). Interacts with FECH; one iron-bound FXN monomer seems to interact with a FECH homodimer. Interacts with SDHA and SDHB. Interacts with ACO2; the interaction is dependent on citrate. Interacts with HSPA9. Component of a complex composed of FXN, NFS1, LYRM4 and ISCU. Interacts with ACO1. Interacts with ISCU (cytoplasmic form). Processed in two steps by mitochondrial processing peptidase (MPP). MPP first cleaves the precursor to intermediate form and subsequently converts the intermediate to yield frataxin mature form (frataxin(81-210)) which is the predominant form. The additional forms, frataxin(56-210) and frataxin(78-210), seem to be produced when the normal maturation process is impaired; their physiological relevance is unsure. As to expression, heart, liver, skeletal muscle, kidney, spleen and thymus. Weakly expressed in the brain and lung.

Its subcellular location is the mitochondrion. It localises to the cytoplasm. The protein resides in the cytosol. It catalyses the reaction 4 Fe(2+) + O2 + 4 H(+) = 4 Fe(3+) + 2 H2O. Functionally, functions as an activator of persulfide transfer to the scaffoding protein ISCU as component of the core iron-sulfur cluster (ISC) assembly complex and participates to the [2Fe-2S] cluster assembly. Accelerates sulfur transfer from NFS1 persulfide intermediate to ISCU and to small thiols such as L-cysteine and glutathione leading to persulfuration of these thiols and ultimately sulfide release. Binds ferrous ion and is released from FXN upon the addition of both L-cysteine and reduced FDX2 during [2Fe-2S] cluster assembly. The core iron-sulfur cluster (ISC) assembly complex is involved in the de novo synthesis of a [2Fe-2S] cluster, the first step of the mitochondrial iron-sulfur protein biogenesis. This process is initiated by the cysteine desulfurase complex (NFS1:LYRM4:NDUFAB1) that produces persulfide which is delivered on the scaffold protein ISCU in a FXN-dependent manner. Then this complex is stabilized by FDX2 which provides reducing equivalents to accomplish the [2Fe-2S] cluster assembly. Finally, the [2Fe-2S] cluster is transferred from ISCU to chaperone proteins, including HSCB, HSPA9 and GLRX5. May play a role in the protection against iron-catalyzed oxidative stress through its ability to catalyze the oxidation of Fe(2+) to Fe(3+); the oligomeric form but not the monomeric form has in vitro ferroxidase activity. May be able to store large amounts of iron in the form of a ferrihydrite mineral by oligomerization; however, the physiological relevance is unsure as reports are conflicting and the function has only been shown using heterologous overexpression systems. May function as an iron chaperone protein that protects the aconitase [4Fe-4S]2+ cluster from disassembly and promotes enzyme reactivation. May play a role as a high affinity iron binding partner for FECH that is capable of both delivering iron to ferrochelatase and mediating the terminal step in mitochondrial heme biosynthesis. Its function is as follows. Modulates the RNA-binding activity of ACO1. May be involved in the cytoplasmic iron-sulfur protein biogenesis. May contribute to oxidative stress resistance and overall cell survival. The polypeptide is Frataxin, mitochondrial (Mus musculus (Mouse)).